Consider the following 375-residue polypeptide: Coproporphyrin III ferrochelatase (375 aa).

Fe-coproporphyrin III contacts are provided by S59 and Y128. Positions 191 and 286 each coordinate Fe(2+).

Belongs to the ferrochelatase family.

It localises to the cytoplasm. It carries out the reaction Fe-coproporphyrin III + 2 H(+) = coproporphyrin III + Fe(2+). The protein operates within porphyrin-containing compound metabolism; protoheme biosynthesis. Involved in coproporphyrin-dependent heme b biosynthesis. Catalyzes the insertion of ferrous iron into coproporphyrin III to form Fe-coproporphyrin III. In Streptomyces griseus subsp. griseus (strain JCM 4626 / CBS 651.72 / NBRC 13350 / KCC S-0626 / ISP 5235), this protein is Coproporphyrin III ferrochelatase.